The sequence spans 110 residues: UPF0060 membrane protein Psyc_0916 (110 aa).

Transmembrane regions (helical) follow at residues 7–27 (VGLFAITALAEIAGCYLPYLW), 33–53 (SIWLLIPGALSLVAFVWLLSL), 63–83 (AAYGGVYISMAILWLWTVNGI), and 87–107 (TWDIVGSVVALIGMAIIMFAP).

This sequence belongs to the UPF0060 family.

It is found in the cell inner membrane. This chain is UPF0060 membrane protein Psyc_0916, found in Psychrobacter arcticus (strain DSM 17307 / VKM B-2377 / 273-4).